Here is a 615-residue protein sequence, read N- to C-terminus: Elongation factor 4 (615 aa).

The tr-type G domain maps to 14–200; sequence ARIRNFCIIA…KVVELIPAPT (187 aa). GTP is bound by residues 26–31 and 147–150; these read DHGKST and NKID.

This sequence belongs to the TRAFAC class translation factor GTPase superfamily. Classic translation factor GTPase family. LepA subfamily.

It localises to the cell membrane. The enzyme catalyses GTP + H2O = GDP + phosphate + H(+). Required for accurate and efficient protein synthesis under certain stress conditions. May act as a fidelity factor of the translation reaction, by catalyzing a one-codon backward translocation of tRNAs on improperly translocated ribosomes. Back-translocation proceeds from a post-translocation (POST) complex to a pre-translocation (PRE) complex, thus giving elongation factor G a second chance to translocate the tRNAs correctly. Binds to ribosomes in a GTP-dependent manner. This Corynebacterium glutamicum (strain ATCC 13032 / DSM 20300 / JCM 1318 / BCRC 11384 / CCUG 27702 / LMG 3730 / NBRC 12168 / NCIMB 10025 / NRRL B-2784 / 534) protein is Elongation factor 4.